Here is a 507-residue protein sequence, read N- to C-terminus: Sterol 14-alpha demethylase CYP51A (507 aa).

A helical membrane pass occupies residues 7 to 29 (YPLWVLVALFAVIIANLLYQQLP). Tyr105 contacts lanosterol. Cys449 contacts heme.

It belongs to the cytochrome P450 family. Heme is required as a cofactor.

Its subcellular location is the endoplasmic reticulum membrane. The enzyme catalyses a 14alpha-methyl steroid + 3 reduced [NADPH--hemoprotein reductase] + 3 O2 = a Delta(14) steroid + formate + 3 oxidized [NADPH--hemoprotein reductase] + 4 H2O + 4 H(+). It catalyses the reaction a 14alpha-methyl steroid + reduced [NADPH--hemoprotein reductase] + O2 = a 14alpha-hydroxymethyl steroid + oxidized [NADPH--hemoprotein reductase] + H2O + H(+). The catalysed reaction is a 14alpha-hydroxymethyl steroid + reduced [NADPH--hemoprotein reductase] + O2 = a 14alpha-formyl steroid + oxidized [NADPH--hemoprotein reductase] + 2 H2O + H(+). It carries out the reaction a 14alpha-formyl steroid + reduced [NADPH--hemoprotein reductase] + O2 = a Delta(14) steroid + formate + oxidized [NADPH--hemoprotein reductase] + H2O + 2 H(+). The enzyme catalyses lanosterol + 3 reduced [NADPH--hemoprotein reductase] + 3 O2 = 4,4-dimethyl-5alpha-cholesta-8,14,24-trien-3beta-ol + formate + 3 oxidized [NADPH--hemoprotein reductase] + 4 H2O + 4 H(+). It catalyses the reaction lanosterol + reduced [NADPH--hemoprotein reductase] + O2 = 32-hydroxylanosterol + oxidized [NADPH--hemoprotein reductase] + H2O + H(+). The catalysed reaction is 32-hydroxylanosterol + reduced [NADPH--hemoprotein reductase] + O2 = 32-oxolanosterol + oxidized [NADPH--hemoprotein reductase] + 2 H2O + H(+). It carries out the reaction 32-oxolanosterol + reduced [NADPH--hemoprotein reductase] + O2 = 4,4-dimethyl-5alpha-cholesta-8,14,24-trien-3beta-ol + formate + oxidized [NADPH--hemoprotein reductase] + H2O + 2 H(+). The enzyme catalyses eburicol + 3 reduced [NADPH--hemoprotein reductase] + 3 O2 = 14-demethyleburicol + formate + 3 oxidized [NADPH--hemoprotein reductase] + 4 H2O + 4 H(+). It catalyses the reaction eburicol + reduced [NADPH--hemoprotein reductase] + O2 = 32-hydroxyeburicol + oxidized [NADPH--hemoprotein reductase] + H2O + H(+). The catalysed reaction is 32-hydroxyeburicol + reduced [NADPH--hemoprotein reductase] + O2 = 32-oxoeburicol + oxidized [NADPH--hemoprotein reductase] + 2 H2O + H(+). It carries out the reaction 32-oxoeburicol + reduced [NADPH--hemoprotein reductase] + O2 = 14-demethyleburicol + formate + oxidized [NADPH--hemoprotein reductase] + H2O + 2 H(+). It functions in the pathway steroid metabolism; ergosterol biosynthesis. Functionally, together with cyp51B and cyp51C, encodes the sterol 14alpha-demethylase that plays a critical role in the third module of ergosterol biosynthesis pathway, being ergosterol the major sterol component in fungal membranes that participates in a variety of functions. CYP51A encodes the sterol 14-alpha-demethylase induced on ergosterol depletion and is responsible for the intrinsic variation in azole sensitivity. The third module or late pathway involves the ergosterol synthesis itself through consecutive reactions that mainly occur in the endoplasmic reticulum (ER) membrane. In filamentous fungi, during the initial step of this module, lanosterol (lanosta-8,24-dien-3beta-ol) can be metabolized to eburicol. Sterol 14alpha-demethylase catalyzes the three-step oxidative removal of the 14alpha-methyl group (C-32) of both these sterols in the form of formate, and converts eburicol and lanosterol to 14-demethyleburicol (4,4,24-trimethylergosta-8,14,24(28)-trienol) and 4,4-dimethyl-5alpha-cholesta-8,14,24-trien-3beta-ol, respectively, which are further metabolized by other enzymes in the pathway to ergosterol. Can also use substrates not intrinsic to fungi, such as 24,25-dihydrolanosterol (DHL), producing 4,4'-dimethyl-8,14-cholestadien-3-beta-ol, but at lower rates than the endogenous substrates. The protein is Sterol 14-alpha demethylase CYP51A of Gibberella zeae (strain ATCC MYA-4620 / CBS 123657 / FGSC 9075 / NRRL 31084 / PH-1) (Wheat head blight fungus).